We begin with the raw amino-acid sequence, 291 residues long: Small ribosomal subunit protein uS2 (291 aa).

This sequence belongs to the universal ribosomal protein uS2 family.

The protein is Small ribosomal subunit protein uS2 of Lawsonia intracellularis (strain PHE/MN1-00).